We begin with the raw amino-acid sequence, 226 residues long: Probable amino-acid ABC transporter permease protein YckA (226 aa).

Residues 27 to 215 (IGYTLLISFV…AICSIAAVFQ (189 aa)) enclose the ABC transmembrane type-1 domain. Helical transmembrane passes span 31 to 51 (LLISFVSMFAGTVIGLFISLA), 73 to 93 (VPILVILFILYFGFPYIGIEF), 94 to 114 (SAVTAALIGFSLNSAAYIAEI), 160 to 180 (VLLDLIKASSLAAMITVPELL), and 194 to 214 (MTMYILTALIYWAICSIAAVF).

This sequence belongs to the binding-protein-dependent transport system permease family. HisMQ subfamily.

It localises to the cell membrane. In terms of biological role, part of a binding-protein-dependent transport system. Probably responsible for the translocation of the substrate across the membrane. In Bacillus subtilis (strain 168), this protein is Probable amino-acid ABC transporter permease protein YckA (yckA).